The following is a 70-amino-acid chain: Putative microRNA 17 host gene protein (70 aa).

The Cytoplasmic segment spans residues 1–20 (MFCHVDVKISSKRYTWTKLP). The chain crosses the membrane as a helical span at residues 21 to 43 (LNVPKLVLIYLQSHFVLFFFSMC). Residues 44–70 (QSIWERPAIGRATTSSASWMVGYDCLL) are Extracellular-facing.

As to expression, highly expressed in B-cell lymphoma and lung cancer.

The protein resides in the membrane. The protein is Putative microRNA 17 host gene protein (MIR17HG) of Homo sapiens (Human).